A 310-amino-acid chain; its full sequence is L-lactate dehydrogenase (310 aa).

Residues 10–11 (MV), D32, Y62, and 76–77 (GV) contribute to the NAD(+) site. Substrate contacts are provided by residues Q79, R85, and 117–120 (NPVD). NAD(+) is bound by residues 115 to 117 (ATN) and S140. Residue 145 to 148 (DTAR) participates in substrate binding. Beta-D-fructose 1,6-bisphosphate is bound by residues R150 and 162–167 (QSVHAY). H172 functions as the Proton acceptor in the catalytic mechanism. Residue Y218 is modified to Phosphotyrosine. A substrate-binding site is contributed by T227.

It belongs to the LDH/MDH superfamily. LDH family. As to quaternary structure, homotetramer.

It localises to the cytoplasm. It carries out the reaction (S)-lactate + NAD(+) = pyruvate + NADH + H(+). It functions in the pathway fermentation; pyruvate fermentation to lactate; (S)-lactate from pyruvate: step 1/1. Allosterically activated by fructose 1,6-bisphosphate (FBP). It binds two fructose 1,6-bisphosphate (FBP) molecules per tetramer. Catalyzes the conversion of lactate to pyruvate. The sequence is that of L-lactate dehydrogenase from Thermus caldophilus.